The sequence spans 97 residues: Co-chaperonin GroES (97 aa).

This sequence belongs to the GroES chaperonin family. As to quaternary structure, heptamer of 7 subunits arranged in a ring. Interacts with the chaperonin GroEL.

It is found in the cytoplasm. In terms of biological role, together with the chaperonin GroEL, plays an essential role in assisting protein folding. The GroEL-GroES system forms a nano-cage that allows encapsulation of the non-native substrate proteins and provides a physical environment optimized to promote and accelerate protein folding. GroES binds to the apical surface of the GroEL ring, thereby capping the opening of the GroEL channel. The protein is Co-chaperonin GroES of Pseudomonas fluorescens (strain ATCC BAA-477 / NRRL B-23932 / Pf-5).